The sequence spans 241 residues: dTTP/UTP pyrophosphatase (241 aa).

At Ser-38 the chain carries Phosphoserine. Asp-105 functions as the Proton acceptor in the catalytic mechanism.

This sequence belongs to the Maf family. YhdE subfamily. A divalent metal cation is required as a cofactor.

The protein localises to the cytoplasm. The protein resides in the nucleus. The catalysed reaction is dTTP + H2O = dTMP + diphosphate + H(+). It catalyses the reaction UTP + H2O = UMP + diphosphate + H(+). In terms of biological role, nucleoside triphosphate pyrophosphatase that hydrolyzes dTTP and UTP. May have a dual role in cell division arrest and in preventing the incorporation of modified nucleotides into cellular nucleic acids. The protein is dTTP/UTP pyrophosphatase of Schizosaccharomyces pombe (strain 972 / ATCC 24843) (Fission yeast).